We begin with the raw amino-acid sequence, 157 residues long: UPF0127 protein TK1120 (157 aa).

The protein belongs to the UPF0127 family.

This chain is UPF0127 protein TK1120, found in Thermococcus kodakarensis (strain ATCC BAA-918 / JCM 12380 / KOD1) (Pyrococcus kodakaraensis (strain KOD1)).